The primary structure comprises 461 residues: Pancreatic triacylglycerol lipase (461 aa).

Positions 1–12 are cleaved as a signal peptide; that stretch reads WTLSLLLGAVVG. Disulfide bonds link cysteine 16–cysteine 22 and cysteine 103–cysteine 114. The active-site Nucleophile is the serine 165. Catalysis depends on aspartate 189, which acts as the Charge relay system. Residues glutamate 200, arginine 203, aspartate 205, and aspartate 208 each coordinate Ca(2+). A disulfide bridge connects residues cysteine 250 and cysteine 274. The active-site Charge relay system is histidine 276. 3 cysteine pairs are disulfide-bonded: cysteine 298–cysteine 309, cysteine 312–cysteine 317, and cysteine 445–cysteine 461. The region spanning 351 to 461 is the PLAT domain; sequence WRYRVDVTLS…EDVLLTLTAC (111 aa).

This sequence belongs to the AB hydrolase superfamily. Lipase family. In terms of assembly, forms a 1:1 stoichiometric complex with (pro)colipase/CLPS.

It is found in the secreted. It carries out the reaction a triacylglycerol + H2O = a diacylglycerol + a fatty acid + H(+). The enzyme catalyses 1,2,3-tributanoylglycerol + H2O = dibutanoylglycerol + butanoate + H(+). The catalysed reaction is 1,2,3-tri-(9Z-octadecenoyl)-glycerol + H2O = di-(9Z)-octadecenoylglycerol + (9Z)-octadecenoate + H(+). It catalyses the reaction all-trans-retinyl hexadecanoate + H2O = all-trans-retinol + hexadecanoate + H(+). It carries out the reaction 1,2-di-(9Z-octadecenoyl)-glycerol + H2O = (9Z-octadecenoyl)-glycerol + (9Z)-octadecenoate + H(+). Inhibited by bile salts, is reactivated by (pro)colipase/CLPS. Its function is as follows. Plays an important role in fat metabolism. It preferentially splits the esters of long-chain fatty acids at positions 1 and 3, producing mainly 2-monoacylglycerol and free fatty acids, and shows considerably higher activity against insoluble emulsified substrates than against soluble ones. This is Pancreatic triacylglycerol lipase (PNLIP) from Equus caballus (Horse).